Consider the following 275-residue polypeptide: NH(3)-dependent NAD(+) synthetase (275 aa).

ATP is bound at residue 46 to 53; sequence GISGGQDS. Residue D52 participates in Mg(2+) binding. R140 contributes to the deamido-NAD(+) binding site. T160 is an ATP binding site. E165 serves as a coordination point for Mg(2+). 2 residues coordinate deamido-NAD(+): K173 and D180. 2 residues coordinate ATP: K189 and T211. Residue 260 to 261 coordinates deamido-NAD(+); the sequence is HK.

This sequence belongs to the NAD synthetase family. Homodimer.

It carries out the reaction deamido-NAD(+) + NH4(+) + ATP = AMP + diphosphate + NAD(+) + H(+). Its pathway is cofactor biosynthesis; NAD(+) biosynthesis; NAD(+) from deamido-NAD(+) (ammonia route): step 1/1. In terms of biological role, catalyzes the ATP-dependent amidation of deamido-NAD to form NAD. Uses ammonia as a nitrogen source. This is NH(3)-dependent NAD(+) synthetase from Salmonella enteritidis PT4 (strain P125109).